The chain runs to 237 residues: Ribonuclease PH (237 aa).

Residues arginine 86 and 124 to 126 contribute to the phosphate site; that span reads GTR.

The protein belongs to the RNase PH family. As to quaternary structure, homohexameric ring arranged as a trimer of dimers.

The enzyme catalyses tRNA(n+1) + phosphate = tRNA(n) + a ribonucleoside 5'-diphosphate. Its function is as follows. Phosphorolytic 3'-5' exoribonuclease that plays an important role in tRNA 3'-end maturation. Removes nucleotide residues following the 3'-CCA terminus of tRNAs; can also add nucleotides to the ends of RNA molecules by using nucleoside diphosphates as substrates, but this may not be physiologically important. Probably plays a role in initiation of 16S rRNA degradation (leading to ribosome degradation) during starvation. The sequence is that of Ribonuclease PH from Methylorubrum extorquens (strain PA1) (Methylobacterium extorquens).